The primary structure comprises 201 residues: Dermatopontin (201 aa).

An N-terminal signal peptide occupies residues 1–18 (MDLTLLWVLLPLVTTAWG). The residue at position 19 (Gln19) is a Pyrrolidone carboxylic acid. Positions 19–186 (QYGGYGYPYQ…AVERDRQWKF (168 aa)) are 2 X 53-55 AA tandem repeats. Position 23 is a sulfotyrosine (Tyr23). 4 consecutive repeat copies span residues 26–79 (PYQQ…ACMP), 70–75 (DRQWNY), 80–135 (TPQS…CCRY), and 125–130 (DREWQF). 5 disulfide bridges follow: Cys50–Cys77, Cys90–Cys132, Cys106–Cys133, Cys139–Cys196, and Cys143–Cys189. The segment at 70-186 (DRQWNYACMP…AVERDRQWKF (117 aa)) is 3 X 6 AA tandem repeats of D-R-[EQ]-W-[NQK]-[FY]. 3 positions are modified to sulfotyrosine: Tyr162, Tyr164, and Tyr167. Residues 181-186 (DRQWKF) form a 2-3 repeat. At Tyr194 the chain carries Sulfotyrosine.

Belongs to the dermatopontin family. Interacts with TGFB1, DCN and collagen. Sulfated on tyrosine residue(s).

It localises to the secreted. The protein localises to the extracellular space. The protein resides in the extracellular matrix. In terms of biological role, seems to mediate adhesion by cell surface integrin binding. May serve as a communication link between the dermal fibroblast cell surface and its extracellular matrix environment. Enhances TGFB1 activity. Inhibits cell proliferation. Accelerates collagen fibril formation, and stabilizes collagen fibrils against low-temperature dissociation. The sequence is that of Dermatopontin (Dpt) from Mus musculus (Mouse).